The sequence spans 252 residues: Ribosomal RNA small subunit methyltransferase J (252 aa).

Residues 126-127 (ER) and aspartate 176 contribute to the S-adenosyl-L-methionine site.

This sequence belongs to the methyltransferase superfamily. RsmJ family.

The protein localises to the cytoplasm. It carries out the reaction guanosine(1516) in 16S rRNA + S-adenosyl-L-methionine = N(2)-methylguanosine(1516) in 16S rRNA + S-adenosyl-L-homocysteine + H(+). In terms of biological role, specifically methylates the guanosine in position 1516 of 16S rRNA. This Bdellovibrio bacteriovorus (strain ATCC 15356 / DSM 50701 / NCIMB 9529 / HD100) protein is Ribosomal RNA small subunit methyltransferase J.